The primary structure comprises 354 residues: uncharacterized protein (354 aa).

In terms of domain architecture, ABC transporter spans 48–285; sequence VETWEISKIY…DEGYEVVLKG (238 aa). Position 87 to 94 (87 to 94) interacts with ATP; sequence GPNGAGKT.

It belongs to the ABC transporter superfamily.

This is an uncharacterized protein from Synechocystis sp. (strain ATCC 27184 / PCC 6803 / Kazusa).